Reading from the N-terminus, the 452-residue chain is Phosphoglucosamine mutase (452 aa).

Residue Ser-103 is the Phosphoserine intermediate of the active site. Mg(2+) contacts are provided by Ser-103, Asp-244, Asp-246, and Asp-248. Phosphoserine is present on Ser-103.

This sequence belongs to the phosphohexose mutase family. Mg(2+) serves as cofactor. In terms of processing, activated by phosphorylation.

The catalysed reaction is alpha-D-glucosamine 1-phosphate = D-glucosamine 6-phosphate. Its function is as follows. Catalyzes the conversion of glucosamine-6-phosphate to glucosamine-1-phosphate. This chain is Phosphoglucosamine mutase, found in Rhodospirillum rubrum (strain ATCC 11170 / ATH 1.1.1 / DSM 467 / LMG 4362 / NCIMB 8255 / S1).